The sequence spans 911 residues: SH3 and PX domain-containing protein 2B (911 aa).

The PX domain maps to 5–129 (RSIVEVKVLD…QFFETRPEDL (125 aa)). The residue at position 25 (tyrosine 25) is a Phosphotyrosine. SH3 domains follow at residues 152 to 211 (MVLE…GQDG) and 221 to 280 (EEEE…KNSG). Residues 275–366 (LKKNSGEPLP…GLNLPKPPIP (92 aa)) form a disordered region. Residues serine 279 and serine 291 each carry the phosphoserine modification. Positions 282–292 (PLPPKPGPGSP) are enriched in pro residues. Positions 311–337 (GREKELLSSQRDGRFEGRPVPDGDAKQ) are enriched in basic and acidic residues. The span at 338 to 347 (RSPKMRQRPP) shows a compositional bias: basic residues. Residues 368–427 (QVEEEYYTIAEFQTTIPDGISFQAGLKVEVIEKNLSGWWYIQIEDKEGWAPATFIDKYKK) form the SH3 3 domain. The segment at 458–834 (NTGSEATGPS…GPWGTGKIGE (377 aa)) is disordered. Composition is skewed to basic and acidic residues over residues 486 to 499 (KDWKGSKDVLRKAS), 517 to 548 (EEKPSLPPRKESIIKSEGELLERERERQRTEQ), 571 to 586 (PARDSRRPEPKPDKSR), 598 to 609 (CGHKVLAKEVKK), and 618 to 628 (SKTDLPEEKPD). Phosphoserine occurs at positions 499 and 528. Pro residues-rich tracts occupy residues 643–653 (RPKPAPSPKTE) and 756–766 (VVPPRRPPPPK). A compositionally biased stretch (gly residues) spans 822-831 (GSLGPWGTGK). Serine 843 bears the Phosphoserine mark. In terms of domain architecture, SH3 4 spans 850–911 (LKDSLYVAVA…IPSNYLRKKP (62 aa)).

This sequence belongs to the SH3PXD2 family. In terms of assembly, interacts with ADAM15. Interacts with NOXO1. Interacts (via SH3 domains) with NOXA1; the interaction is direct. Interacts with FASLG. Post-translationally, phosphorylated in SRC-transformed cells. As to expression, expressed in fibroblasts.

It localises to the cytoplasm. Its subcellular location is the cell projection. The protein resides in the podosome. Functionally, adapter protein involved in invadopodia and podosome formation and extracellular matrix degradation. Binds matrix metalloproteinases (ADAMs), NADPH oxidases (NOXs) and phosphoinositides. Acts as an organizer protein that allows NOX1- or NOX3-dependent reactive oxygen species (ROS) generation and ROS localization. Plays a role in mitotic clonal expansion during the immediate early stage of adipocyte differentiation. The chain is SH3 and PX domain-containing protein 2B (SH3PXD2B) from Homo sapiens (Human).